The sequence spans 358 residues: Leukotriene B4 receptor 2 (358 aa).

Over 1 to 24 (MSVCYRPPGNETLLSWKTSRATGT) the chain is Extracellular. Asparagine 10 carries an N-linked (GlcNAc...) asparagine glycan. The chain crosses the membrane as a helical span at residues 25-45 (AFLLLAALLGLPGNGFVVWSL). The Cytoplasmic segment spans residues 46–60 (AGWRPARGRPLAATL). A helical membrane pass occupies residues 61-81 (VLHLALADGAVLLLTPLFVAF). The Extracellular portion of the chain corresponds to 82 to 96 (LTRQAWPLGQAGCKA). The chain crosses the membrane as a helical span at residues 97–117 (VYYVCALSMYASVLLTGLLSL). Residues 118 to 140 (QRCLAVTRPFLAPRLRSPALARR) are Cytoplasmic-facing. A helical membrane pass occupies residues 141–161 (LLLAVWLAALLLAVPAAVYRH). At 162-185 (LWRDRVCQLCHPSPVHAAAHLSLE) the chain is on the extracellular side. Residues 186 to 206 (TLTAFVLPFGLMLGCYSVTLA) form a helical membrane-spanning segment. The Cytoplasmic portion of the chain corresponds to 207–224 (RLRGARWGSGRHGARVGR). The chain crosses the membrane as a helical span at residues 225-245 (LVSAIVLAFGLLWAPYHAVNL). Over 246–275 (LQAVAALAPPEGALAKLGGAGQAARAGTTA) the chain is Extracellular. The chain crosses the membrane as a helical span at residues 276–296 (LAFFSSSVNPVLYVFTAGDLL). Over 297–358 (PRAGPRFLTR…MEKDGPEWDL (62 aa)) the chain is Cytoplasmic. The disordered stretch occupies residues 311-358 (SGEARGGGRSREGTMELRTTPQLKVVGQGRGNGDPGGGMEKDGPEWDL). Over residues 338–348 (QGRGNGDPGGG) the composition is skewed to gly residues. The segment covering 349–358 (MEKDGPEWDL) has biased composition (basic and acidic residues).

It belongs to the G-protein coupled receptor 1 family. Widely expressed.

It localises to the cell membrane. In terms of biological role, low-affinity receptor for leukotrienes including leukotriene B4. Mediates chemotaxis of granulocytes and macrophages. The response is mediated via G-proteins that activate a phosphatidylinositol-calcium second messenger system. The rank order of affinities for the leukotrienes is LTB4 &gt; 12-epi-LTB4 &gt; LTB5 &gt; LTB3. In Homo sapiens (Human), this protein is Leukotriene B4 receptor 2 (LTB4R2).